The chain runs to 304 residues: GTPase Era (304 aa).

Residues 7–178 form the Era-type G domain; that stretch reads KCGVVAVLGA…KNALAALMPE (172 aa). The interval 15–22 is G1; that stretch reads GAPNAGKS. 15 to 22 contacts GTP; it reads GAPNAGKS. Positions 41-45 are G2; it reads QTTRA. Residues 66-69 are G3; sequence DTPG. GTP is bound by residues 66-70 and 128-131; these read DTPGI and NKVD. Residues 128–131 are G4; it reads NKVD. Residues 157–159 form a G5 region; the sequence is VSA. Residues 209–286 enclose the KH type-2 domain; it reads LHEELPYDSA…HLFLHVKVDE (78 aa).

It belongs to the TRAFAC class TrmE-Era-EngA-EngB-Septin-like GTPase superfamily. Era GTPase family. In terms of assembly, monomer.

The protein localises to the cytoplasm. It localises to the cell inner membrane. In terms of biological role, an essential GTPase that binds both GDP and GTP, with rapid nucleotide exchange. Plays a role in 16S rRNA processing and 30S ribosomal subunit biogenesis and possibly also in cell cycle regulation and energy metabolism. This is GTPase Era from Erythrobacter litoralis (strain HTCC2594).